Consider the following 334-residue polypeptide: Ornithine carbamoyltransferase, catabolic (334 aa).

Carbamoyl phosphate contacts are provided by residues 57–60 (STRT), Gln-84, Arg-108, and 135–138 (HPTQ). L-ornithine contacts are provided by residues Asn-168, Asp-232, and 236-237 (SM). Residues 274 to 275 (CL) and Arg-321 contribute to the carbamoyl phosphate site.

Belongs to the aspartate/ornithine carbamoyltransferase superfamily. OTCase family.

It is found in the cytoplasm. It catalyses the reaction carbamoyl phosphate + L-ornithine = L-citrulline + phosphate + H(+). The protein operates within amino-acid degradation; L-arginine degradation via ADI pathway; carbamoyl phosphate from L-arginine: step 2/2. Reversibly catalyzes the transfer of the carbamoyl group from carbamoyl phosphate (CP) to the N(epsilon) atom of ornithine (ORN) to produce L-citrulline. The protein is Ornithine carbamoyltransferase, catabolic (arcB) of Haemophilus influenzae (strain ATCC 51907 / DSM 11121 / KW20 / Rd).